The following is a 313-amino-acid chain: Olfactory receptor 51A4 (313 aa).

Topologically, residues Met1–Ile27 are extracellular. A glycan (N-linked (GlcNAc...) asparagine) is linked at Asn5. Residues Trp28–Leu48 traverse the membrane as a helical segment. At Phe49–Ser56 the chain is on the cytoplasmic side. Residues Leu57–Leu77 traverse the membrane as a helical segment. Over Ser78–Ala101 the chain is Extracellular. The cysteines at positions 99 and 191 are disulfide-linked. A helical membrane pass occupies residues Gln102–Phe122. Over Asp123–Val141 the chain is Cytoplasmic. A helical transmembrane segment spans residues Arg142–Pro162. The Extracellular portion of the chain corresponds to Phe163–Val198. A helical membrane pass occupies residues Ile199–Ser218. The Cytoplasmic segment spans residues Tyr219 to Ala238. A helical transmembrane segment spans residues Leu239 to Leu259. The Extracellular portion of the chain corresponds to Ala260 to Asn274. Residues Val275–Val295 form a helical membrane-spanning segment. Over Lys296–Ile313 the chain is Cytoplasmic.

It belongs to the G-protein coupled receptor 1 family.

Its subcellular location is the cell membrane. Functionally, odorant receptor. This Homo sapiens (Human) protein is Olfactory receptor 51A4 (OR51A4).